A 144-amino-acid polypeptide reads, in one-letter code: Peroxisomal membrane protein PEX34 (144 aa).

Transmembrane regions (helical) follow at residues 18–30, 52–73, and 109–131; these read NIWS…LDFF, VWLC…KLCK, and TAAL…RLFK.

As to quaternary structure, homooligomer. Interacts with PEX11, PEX25 and PEX27.

Its subcellular location is the peroxisome membrane. Its function is as follows. In concert with the three peroxisome divisional factors, PEX11, PEX25 and PEX27, controls peroxisome morphology and abundance under conditions of peroxisome proliferation. Maintains mature peroxisomes in actively dividing cells. This Saccharomyces cerevisiae (strain ATCC 204508 / S288c) (Baker's yeast) protein is Peroxisomal membrane protein PEX34 (PEX34).